The primary structure comprises 492 residues: Cytochrome P450 monooxygenase ATEG_03631 (492 aa).

Residues F10–L30 traverse the membrane as a helical segment. N309 carries an N-linked (GlcNAc...) asparagine glycan. Heme is bound at residue C457.

This sequence belongs to the cytochrome P450 family. Requires heme as cofactor.

The protein resides in the membrane. Its pathway is secondary metabolite biosynthesis. Cytochrome P450 monooxygenase; part of the cluster A that mediates the biosynthesis of azasperpyranones, members of the azaphilone family that exhibit anti-cancer activities. Azasperpyranones are synthesized by 2 clusters, A and B. Cluster A is responsible for the production of the polyhydric phenol moiety while the azaphilonoid scaffold is produced by the cluster B. The non-reducing polyketide synthase ATEG_03629 produces 5-methyl orsellinic acid, which is then reduced to 5-methyl orsellinic aldehyde by the NRPS-like protein ATEG_03630. 5-methyl orsellinic aldehyde is then first hydroxylated by the FAD-dependent monooxygenase ATEG_03635 and subsequently hydroxylated by the cytochrome P450 monooxygenase ATEG_03631 to produce the unstable polyhydric phenol precursor of azasperpyranones. On the other hand, the polyketide synthase ATEG_07659 is responsible for producing the 3,5-dimethyloctadienone moiety from acetyl-CoA, three malonyl-CoA, and two S-adenosyl methionines (SAM). The 3,5-dimethyloctadienone moiety is then loaded onto the SAT domain of ATEG_07661 and extended with four malonyl-CoA and one SAM, which leads to the formation of 2,4-dihydroxy-6-(5,7-dimethyl-2-oxo-trans-3-trans-5-nonadienyl)-3-methylbenzaldehyde (compound 8) after reductive release and aldol condensation. The FAD-dependent monooxygenase ATEG_07662 is the next enzyme in the biosynthesis sequence and hydroxylates the side chain at the benzylic position of compound 8. In Aspergillus nidulans, afoF, the ortholog of the FAD-dependent oxygenase ATEG_07660, is the key enzyme for the biosynthesis of asperfuranone by catalyzing the hydroxylation at C-8 of to prevent the formation of a six-membered ring hemiacetal intermediate and thus facilitating the formation of a five-membered ring to produce asperfuranone. In Aspergillus terreus, ATEG_07660 is probably not functional, which leads to the formation of the six-membered ring hemiacetal intermediate presperpyranone instead of asperfuranone. Finally, ATEG_03636 is involved in the condensation of the polyhydric phenol moiety produced by cluster A and the perasperpyranone precursor produced by cluster B, to yield azasperpyranone A. Further modifications of azasperpyranone A result in the production of derivatives, including azasperpyranone B to F. This Aspergillus terreus (strain NIH 2624 / FGSC A1156) protein is Cytochrome P450 monooxygenase ATEG_03631.